The following is a 272-amino-acid chain: Putative phosphoenolpyruvate synthase regulatory protein (272 aa).

152-159 contacts ADP; sequence GVSRCGKT.

The protein belongs to the pyruvate, phosphate/water dikinase regulatory protein family. PSRP subfamily.

It catalyses the reaction [pyruvate, water dikinase] + ADP = [pyruvate, water dikinase]-phosphate + AMP + H(+). The enzyme catalyses [pyruvate, water dikinase]-phosphate + phosphate + H(+) = [pyruvate, water dikinase] + diphosphate. In terms of biological role, bifunctional serine/threonine kinase and phosphorylase involved in the regulation of the phosphoenolpyruvate synthase (PEPS) by catalyzing its phosphorylation/dephosphorylation. This chain is Putative phosphoenolpyruvate synthase regulatory protein, found in Pseudomonas savastanoi pv. phaseolicola (strain 1448A / Race 6) (Pseudomonas syringae pv. phaseolicola (strain 1448A / Race 6)).